Reading from the N-terminus, the 827-residue chain is Putative transcriptional regulatory protein C16G5.16 (827 aa).

Positions 16 to 42 form a DNA-binding region, zn(2)-C6 fungal-type; the sequence is CDECHRRKIKCDQRRPCSNCIAYNYEC. 3 disordered regions span residues 80–114, 158–193, and 794–827; these read LKLPSFLAPPNDKDSPVNQSPWKRSDSSKRSSSQD, TVPNPVQESNSSSSQPDPLSFPYLPPTPAEDEHKKP, and QPPSMTNQVAYPTVRDGSNNSPDHPSSSNSKRTE. The span at 102-112 shows a compositional bias: basic and acidic residues; the sequence is KRSDSSKRSSS. Ser112 is modified (phosphoserine). 2 stretches are compositionally biased toward low complexity: residues 159-179 and 811-827; these read VPNPVQESNSSSSQPDPLSFP and SNNSPDHPSSSNSKRTE.

The protein belongs to the ASG1 family.

The protein localises to the cytoplasm. The protein resides in the nucleus. This chain is Putative transcriptional regulatory protein C16G5.16, found in Schizosaccharomyces pombe (strain 972 / ATCC 24843) (Fission yeast).